We begin with the raw amino-acid sequence, 464 residues long: Soluble pyridine nucleotide transhydrogenase (464 aa).

35–44 (DNRPLVGGNC) is a binding site for FAD.

This sequence belongs to the class-I pyridine nucleotide-disulfide oxidoreductase family. FAD serves as cofactor.

Its subcellular location is the cytoplasm. The catalysed reaction is NAD(+) + NADPH = NADH + NADP(+). In terms of biological role, conversion of NADPH, generated by peripheral catabolic pathways, to NADH, which can enter the respiratory chain for energy generation. In Ectopseudomonas mendocina (strain ymp) (Pseudomonas mendocina), this protein is Soluble pyridine nucleotide transhydrogenase.